The following is a 194-amino-acid chain: MAENLAGNDRLIWIDLEMTGLDTDRDSIIEIATIVTDAQLNVLAEGPELAIAHPLETLEAMDEWNRNQHRRSGLWQRVLDSQVTHAQAEAQTVAFLGEWIRAGASPMCGNSICQDRRFLHRQMSRLERYFHYRNLDVSTIKELARRWAPTVANGFAKSSAHTALSDVRDSINELRHYRQFMGALGGDTAMDVEG.

Residues 11 to 174 (LIWIDLEMTG…SDVRDSINEL (164 aa)) enclose the Exonuclease domain. Y132 is a catalytic residue.

Belongs to the oligoribonuclease family.

It is found in the cytoplasm. In terms of biological role, 3'-to-5' exoribonuclease specific for small oligoribonucleotides. This chain is Oligoribonuclease, found in Xanthomonas oryzae pv. oryzae (strain MAFF 311018).